The sequence spans 120 residues: Large ribosomal subunit protein bL20 (120 aa).

It belongs to the bacterial ribosomal protein bL20 family.

Binds directly to 23S ribosomal RNA and is necessary for the in vitro assembly process of the 50S ribosomal subunit. It is not involved in the protein synthesizing functions of that subunit. This Paracidovorax citrulli (strain AAC00-1) (Acidovorax citrulli) protein is Large ribosomal subunit protein bL20.